The primary structure comprises 1241 residues: ATP-dependent helicase/nuclease subunit A (1241 aa).

The UvrD-like helicase ATP-binding domain occupies 12–485 (SQWTDDQWKA…IDLAKNFRSR (474 aa)). An ATP-binding site is contributed by 33-40 (AAAGSGKT). The region spanning 505–805 (GEIDYDADAE…RIMTIHKSKG (301 aa)) is the UvrD-like helicase C-terminal domain.

It belongs to the helicase family. AddA subfamily. Heterodimer of AddA and AddB/RexB. Requires Mg(2+) as cofactor.

The enzyme catalyses Couples ATP hydrolysis with the unwinding of duplex DNA by translocating in the 3'-5' direction.. It catalyses the reaction ATP + H2O = ADP + phosphate + H(+). Functionally, the heterodimer acts as both an ATP-dependent DNA helicase and an ATP-dependent, dual-direction single-stranded exonuclease. Recognizes the chi site generating a DNA molecule suitable for the initiation of homologous recombination. The AddA nuclease domain is required for chi fragment generation; this subunit has the helicase and 3' -&gt; 5' nuclease activities. In Bacillus thuringiensis (strain Al Hakam), this protein is ATP-dependent helicase/nuclease subunit A.